The sequence spans 183 residues: Disulfide bond formation protein B 2 (183 aa).

The Cytoplasmic segment spans residues 1 to 9 (MSLACSRSL). A helical transmembrane segment spans residues 10-26 (FFMAFTAGILALGASYY). Topologically, residues 27-44 (LEYAVGLVPCSLCLVQRL) are periplasmic. Cys36 and Cys39 are joined by a disulfide. A helical membrane pass occupies residues 45 to 61 (FMSVLTLCCGLAAVHGP). Topologically, residues 62–68 (QRVGLSL) are cytoplasmic. The helical transmembrane segment at 69 to 85 (YWMVTLLSSLGGTTAAW) threads the bilayer. Over 86 to 142 (RQVLFQSDSLQELAHCAPNPEEMFSSLPWLCALMRMFNDTADCAELSWTLFDLSIPE) the chain is Periplasmic. Residues Cys101 and Cys128 are joined by a disulfide bond. The helical transmembrane segment at 143–161 (WSLLFFVGMSILAVYQLLR) threads the bilayer. Residues 162-183 (QVWMALQRPLSGQPSHPALVRD) lie on the Cytoplasmic side of the membrane.

This sequence belongs to the DsbB family.

It localises to the cell inner membrane. Its function is as follows. Required for disulfide bond formation in some periplasmic proteins. Acts by oxidizing the DsbA protein. This chain is Disulfide bond formation protein B 2, found in Pseudomonas fluorescens (strain Pf0-1).